A 245-amino-acid chain; its full sequence is Bis(5'-nucleosyl)-tetraphosphatase PrpE [asymmetrical] (245 aa).

It belongs to the PrpE family. Ni(2+) serves as cofactor.

The catalysed reaction is P(1),P(4)-bis(5'-guanosyl) tetraphosphate + H2O = GMP + GTP + 2 H(+). Its function is as follows. Asymmetrically hydrolyzes Ap4p to yield AMP and ATP. The chain is Bis(5'-nucleosyl)-tetraphosphatase PrpE [asymmetrical] from Geobacillus thermodenitrificans (strain NG80-2).